Reading from the N-terminus, the 321-residue chain is Transmembrane protein 255A (321 aa).

Helical transmembrane passes span 29-49 (VFVT…GMAA), 56-76 (VTVG…LGII), 88-108 (LVAS…CAIV), and 200-220 (TILN…LGGF). Residues 279 to 297 (STPSGLSDDPNGQASSFMW) are compositionally biased toward polar residues. Residues 279–300 (STPSGLSDDPNGQASSFMWPSN) form a disordered region.

The protein belongs to the TMEM255 family.

It localises to the membrane. This chain is Transmembrane protein 255A (tmem255a), found in Xenopus laevis (African clawed frog).